Consider the following 455-residue polypeptide: Indoleacetamide hydrolase (455 aa).

Catalysis depends on charge relay system residues lysine 71 and serine 146. The active-site Acyl-ester intermediate is serine 170.

This sequence belongs to the amidase family.

It participates in plant hormone metabolism; auxin biosynthesis. Functionally, hydrolyzes indole-3-acetamide (IAM) into indole-3-acetic acid (IAA). The polypeptide is Indoleacetamide hydrolase (iaaH) (Pseudomonas savastanoi (Pseudomonas syringae pv. savastanoi)).